Here is a 103-residue protein sequence, read N- to C-terminus: Small ribosomal subunit protein uS10 (103 aa).

Belongs to the universal ribosomal protein uS10 family. In terms of assembly, part of the 30S ribosomal subunit.

In terms of biological role, involved in the binding of tRNA to the ribosomes. The chain is Small ribosomal subunit protein uS10 from Wigglesworthia glossinidia brevipalpis.